The chain runs to 384 residues: 8-amino-7-oxononanoate synthase (384 aa).

Substrate is bound at residue R21. G108–F109 contributes to the pyridoxal 5'-phosphate binding site. H133 provides a ligand contact to substrate. Pyridoxal 5'-phosphate is bound by residues S179, H207, and T233. The residue at position 236 (K236) is an N6-(pyridoxal phosphate)lysine. Residue T352 coordinates substrate.

The protein belongs to the class-II pyridoxal-phosphate-dependent aminotransferase family. BioF subfamily. As to quaternary structure, homodimer. Pyridoxal 5'-phosphate is required as a cofactor.

It catalyses the reaction 6-carboxyhexanoyl-[ACP] + L-alanine + H(+) = (8S)-8-amino-7-oxononanoate + holo-[ACP] + CO2. It participates in cofactor biosynthesis; biotin biosynthesis. Functionally, catalyzes the decarboxylative condensation of pimeloyl-[acyl-carrier protein] and L-alanine to produce 8-amino-7-oxononanoate (AON), [acyl-carrier protein], and carbon dioxide. The polypeptide is 8-amino-7-oxononanoate synthase (Escherichia coli (strain K12 / DH10B)).